A 374-amino-acid chain; its full sequence is Chaperone protein DnaJ (374 aa).

In terms of domain architecture, J spans 4–68 (DYYEILGVSR…EMKARFDRFG (65 aa)). Residues 132-214 (GGDKELTIKH…CGGRGQKEAT (83 aa)) form a CR-type zinc finger. Residues Cys-145, Cys-148, Cys-162, Cys-165, Cys-188, Cys-191, Cys-202, and Cys-205 each contribute to the Zn(2+) site. 4 CXXCXGXG motif repeats span residues 145–152 (CGTCNGSG), 162–169 (CSTCGGTG), 188–195 (CPSCNGSG), and 202–209 (CVDCGGRG).

Belongs to the DnaJ family. As to quaternary structure, homodimer. It depends on Zn(2+) as a cofactor.

Its subcellular location is the cytoplasm. Its function is as follows. Participates actively in the response to hyperosmotic and heat shock by preventing the aggregation of stress-denatured proteins and by disaggregating proteins, also in an autonomous, DnaK-independent fashion. Unfolded proteins bind initially to DnaJ; upon interaction with the DnaJ-bound protein, DnaK hydrolyzes its bound ATP, resulting in the formation of a stable complex. GrpE releases ADP from DnaK; ATP binding to DnaK triggers the release of the substrate protein, thus completing the reaction cycle. Several rounds of ATP-dependent interactions between DnaJ, DnaK and GrpE are required for fully efficient folding. Also involved, together with DnaK and GrpE, in the DNA replication of plasmids through activation of initiation proteins. This chain is Chaperone protein DnaJ, found in Trichodesmium erythraeum (strain IMS101).